We begin with the raw amino-acid sequence, 862 residues long: Probable inorganic carbon transporter subunit DabA (862 aa).

Residues Cys-365, Asp-367, His-540, and Cys-555 each contribute to the Zn(2+) site.

Belongs to the inorganic carbon transporter (TC 9.A.2) DabA family. In terms of assembly, forms a complex with DabB. It depends on Zn(2+) as a cofactor.

It localises to the cell inner membrane. Functionally, part of an energy-coupled inorganic carbon pump. This Vibrio cholerae serotype O1 (strain ATCC 39315 / El Tor Inaba N16961) protein is Probable inorganic carbon transporter subunit DabA.